The chain runs to 111 residues: Elevenin (111 aa).

Residues 1–24 (MAPSQKALLVLVLSMLLTASDSRA) form the signal peptide. An intrachain disulfide couples C29 to C38. Residues 44 to 111 (KRGGDSLSVG…TEQLDRLLTL (68 aa)) constitute a propeptide that is removed on maturation.

The protein belongs to the elevenin family. As to quaternary structure, monomer. In terms of tissue distribution, expressed by the venom duct.

Its subcellular location is the secreted. Its function is as follows. May mimic the function of prey elevenin neuropeptide. In vivo, intracranial injection in mice induces hyperactivity. The protein is Elevenin of Conus ebraeus (Hebrew cone).